Here is a 143-residue protein sequence, read N- to C-terminus: Ribonuclease H (143 aa).

The region spanning 1-136 (MQEIEIFCDG…CDSLAKLEAQ (136 aa)) is the RNase H type-1 domain. Residues D9, E47, D69, and D128 each coordinate Mg(2+).

This sequence belongs to the RNase H family. Monomer. The cofactor is Mg(2+).

The protein localises to the cytoplasm. It catalyses the reaction Endonucleolytic cleavage to 5'-phosphomonoester.. Endonuclease that specifically degrades the RNA of RNA-DNA hybrids. This chain is Ribonuclease H, found in Helicobacter pylori (strain HPAG1).